Reading from the N-terminus, the 162-residue chain is Large ribosomal subunit protein uL10 (162 aa).

This sequence belongs to the universal ribosomal protein uL10 family. As to quaternary structure, part of the ribosomal stalk of the 50S ribosomal subunit. The N-terminus interacts with L11 and the large rRNA to form the base of the stalk. The C-terminus forms an elongated spine to which L12 dimers bind in a sequential fashion forming a multimeric L10(L12)X complex.

Forms part of the ribosomal stalk, playing a central role in the interaction of the ribosome with GTP-bound translation factors. The protein is Large ribosomal subunit protein uL10 of Phytoplasma mali (strain AT).